We begin with the raw amino-acid sequence, 135 residues long: Histone H3 type 2 (135 aa).

The interval 1 to 40 (MARTKQTARKSTGGKAPRKQLATKAARKTPATGGVKKPHR) is disordered. K5 bears the N6-methyllysine mark. K10 bears the N6-acetyllysine; alternate mark. K10 carries the N6-methyllysine; alternate modification. S11 is modified (phosphoserine). T12 bears the Phosphothreonine mark. N6-acetyllysine is present on residues K15, K19, and K24. The residue at position 28 (K28) is an N6-acetyllysine; alternate. Position 28 is an N6-methyllysine; alternate (K28). N6-methyllysine is present on residues K36 and K37.

This sequence belongs to the histone H3 family. As to quaternary structure, the nucleosome is a histone octamer containing two molecules each of H2A, H2B, H3 and H4 assembled in one H3-H4 heterotetramer and two H2A-H2B heterodimers. The octamer wraps approximately 147 bp of DNA. Acetylation is generally linked to gene activation. Acetylated to form H3K9ac (11%), H3K14ac (17%), H3K18ac (11%), H3K23ac (16%) and H3K27ac (7%). H3K4, H3K35 and H3K36 are not acetylated. H3K4me prevents acetylation. 32% of the histone H3 are acetylated with, on average, 2.4 acetyl-Lys. They are all continuously deacatylated and re-acetylated with a half-life of approximately 2 minutes. Post-translationally, monomethylated to form H3K4me1 (81%), H3K9me1 (16%), H3K27me1 (25%), H3K35me1 (25%) and H3K36me1 (5%). No methylation at H3K14, H3K18 and H3K23. Methylated by a protein complex that includes Mut11. Set1 methylates specifically H3K4. H3K4me1 is associated with silenced euchromatin. Set3 forms H3K9me1, while H3K9me2 is undetected. H3K9me1 is specifically associated with silent, multi-copy transgenes. In terms of processing, no phosphorylation detected.

It is found in the nucleus. It localises to the chromosome. In terms of biological role, core component of nucleosome. Nucleosomes wrap and compact DNA into chromatin, limiting DNA accessibility to the cellular machineries which require DNA as a template. Histones thereby play a central role in transcription regulation, DNA repair, DNA replication and chromosomal stability. DNA accessibility is regulated via a complex set of post-translational modifications of histones, also called histone code, and nucleosome remodeling. This is Histone H3 type 2 (ch3-II) from Chlamydomonas reinhardtii (Chlamydomonas smithii).